The following is a 198-amino-acid chain: MSAEEKNLIEILEEGHKVDVVKYIDYVSAPQAGAIATFSGTTRDMFEGKTVLELRYEAYVPMATRCLSSICTTARSTWDIHKIAVAHRLGPVPVGETSVLIAVSSVHRADGLDACKFLIDELKASVPIWKKEVYTNGEIWKENSEFMEKRLELAEKRDSIVKKTVVEEHRRRGCCGSKVRVEEDEEHKDITGDNKSSS.

Substrate-binding positions include His107–Arg108, Lys123, and Lys130–Glu132.

The protein belongs to the MoaE family. MOCS2B subfamily. As to quaternary structure, heterotetramer; composed of 2 small (MOCS2A) and 2 large (MOCS2B) subunits.

Its subcellular location is the cytoplasm. It carries out the reaction 2 [molybdopterin-synthase sulfur-carrier protein]-C-terminal-Gly-aminoethanethioate + cyclic pyranopterin phosphate + H2O = molybdopterin + 2 [molybdopterin-synthase sulfur-carrier protein]-C-terminal Gly-Gly + 2 H(+). It functions in the pathway cofactor biosynthesis; molybdopterin biosynthesis. Catalytic subunit of the molybdopterin synthase complex, a complex that catalyzes the conversion of precursor Z into molybdopterin. Acts by mediating the incorporation of 2 sulfur atoms from thiocarboxylated MOCS2A into precursor Z to generate a dithiolene group. The chain is Molybdopterin synthase catalytic subunit from Arabidopsis thaliana (Mouse-ear cress).